A 209-amino-acid polypeptide reads, in one-letter code: Uracil phosphoribosyltransferase (209 aa).

5-phospho-alpha-D-ribose 1-diphosphate is bound by residues arginine 79, arginine 104, and 131-139 (DPMLATGAS). Uracil contacts are provided by residues isoleucine 194 and 199–201 (GDA). Aspartate 200 is a 5-phospho-alpha-D-ribose 1-diphosphate binding site.

Belongs to the UPRTase family. Requires Mg(2+) as cofactor.

It carries out the reaction UMP + diphosphate = 5-phospho-alpha-D-ribose 1-diphosphate + uracil. It functions in the pathway pyrimidine metabolism; UMP biosynthesis via salvage pathway; UMP from uracil: step 1/1. Allosterically activated by GTP. Its function is as follows. Catalyzes the conversion of uracil and 5-phospho-alpha-D-ribose 1-diphosphate (PRPP) to UMP and diphosphate. The chain is Uracil phosphoribosyltransferase from Staphylococcus haemolyticus (strain JCSC1435).